The sequence spans 184 residues: Calmodulin-related protein (184 aa).

EF-hand domains lie at 8–43 (DQIS…LGQN), 44–79 (PTEA…KMKD), 81–116 (DSEE…LGEK), and 117–152 (LTDE…NRRR). 14 residues coordinate Ca(2+): aspartate 21, aspartate 23, aspartate 25, cysteine 27, glutamate 32, aspartate 57, aspartate 59, asparagine 61, threonine 63, glutamate 68, aspartate 94, aspartate 96, asparagine 98, and glutamate 105. Lysine 116 is subject to N6,N6,N6-trimethyllysine. Ca(2+) contacts are provided by aspartate 130, aspartate 132, aspartate 134, glutamine 136, and glutamate 141. The disordered stretch occupies residues 156 to 184 (EESKRSVNSNISRSNNGRKVRKRDRCTIL). Residues 161-170 (SVNSNISRSN) show a composition bias toward low complexity. Residues 171–184 (NGRKVRKRDRCTIL) show a composition bias toward basic residues.

It belongs to the calmodulin family.

Functionally, calmodulin mediates the control of a large number of enzymes, ion channels and other proteins by Ca(2+). Among the enzymes to be stimulated by the calmodulin-Ca(2+) complex are a number of protein kinases and phosphatases. The sequence is that of Calmodulin-related protein (CAM53) from Petunia hybrida (Petunia).